The sequence spans 287 residues: X-box-binding protein 1 (287 aa).

Residues 61–117 (EEKMDRRKLKNRVAAQNARDKKKERSAKIEDVMRDLVEENRRLRAENERLRRQNKNL) form the bZIP domain. The interval 63–87 (KMDRRKLKNRVAAQNARDKKKERSA) is disordered. Positions 63–88 (KMDRRKLKNRVAAQNARDKKKERSAK) are basic motif. The span at 78-87 (ARDKKKERSA) shows a compositional bias: basic and acidic residues. The segment at 89–117 (IEDVMRDLVEENRRLRAENERLRRQNKNL) is leucine-zipper.

In terms of assembly, interacts with SUMO-conjugating enzyme ubc-9; the interaction is direct. Post-translationally, sumoylated. Sumoylation may negatively modulate the transcription of genes involved in the ER-stress-response.

It localises to the nucleus. Functionally, required for transcriptional regulation of the unfolded protein response (UPR) in the endoplasmic reticulum (ER) under stressed conditions, acting downstream of ire-1, and also maintaining ER homeostasis via a negative feedback loop, in parallel with ER kinase pek-1. May also regulate Golgi protein trafficking distal to the ER. Protects the host organism from the detrimental effects of mounting an innate immune response to microbes, such as the Gram-negative bacterium P.aeruginosa, probably by modulating the UPR. Its function is as follows. Plays a role in the unconventional cytoplasmic splicing processing of its own mRNA triggered by the endoplasmic reticulum (ER) transmembrane endoribonuclease ire-1: upon ER stress, the emerging xbp-1 polypeptide chain, as part of a mRNA-ribosome-nascent chain (R-RNC) complex, cotranslationally recruits its own unprocessed mRNA through transient docking to the ER membrane and translational pausing, therefore facilitating efficient ire-1-mediated xbp-1 mRNA isoform 2 production. In terms of biological role, functions as a stress-inducible potent transcriptional activator during endoplasmic reticulum (ER) stress by inducing unfolded protein response (UPR) target genes via binding to the UPR element (UPRE). Plays a role in modulation of the UPR, lipid metabolism, proteostasis, and lifespan. In neurons, rescues stress resistance, increases longevity, and, drives expression of lysosomal genes in the intestine and activates the UPR in distal, non-neuronal cell types through a cell-nonautonomous mechanism. In neurons or intestine, plays a role in protection against proteotoxicity, acting via positive modulation of genes involved in lysosomal function, including lipases and the fatty-acid desaturase fat-6. Protection against proteotoxicity in neurons is dependent upon the transcription factor atf-6. The polypeptide is X-box-binding protein 1 (Caenorhabditis elegans).